The following is a 537-amino-acid chain: Zinc finger protein 703 (537 aa).

Disordered regions lie at residues 1 to 38, 90 to 254, and 300 to 323; these read MNCS…LRQA, SQIG…VAPV, and VGNQ…LTGA. Residues 101 to 111 are compositionally biased toward polar residues; sequence SKLNSVTSSGL. Low complexity predominate over residues 149–158; it reads GSSSGGAADK. The span at 176–185 shows a compositional bias: polar residues; sequence SPSSRVSSPG. Over residues 188–203 the composition is skewed to basic and acidic residues; the sequence is CDSKNNESQEKKEPEA. The span at 205–220 shows a compositional bias: polar residues; that stretch reads KANSETSQVNPTLTRA. Residues 221-232 are compositionally biased toward low complexity; that stretch reads STSNSSAESSQS. Residues 409-437 form a C2H2-type zinc finger; that stretch reads HICNWVSASGPCDKRFSTSEELLAHLRTH.

It belongs to the Elbow/Noc family.

The protein resides in the nucleus. Its subcellular location is the cytoplasm. Functionally, transcriptional corepressor which does not bind directly to DNA and may regulate transcription through recruitment of histone deacetylases to gene promoters. Regulates cell adhesion, migration and proliferation. Involved in specification of the lateral neural plate border (NPB). May be required for segmental gene expression during hindbrain development. This Xenopus tropicalis (Western clawed frog) protein is Zinc finger protein 703 (znf703).